Here is a 402-residue protein sequence, read N- to C-terminus: MLSPEVRALVKATAPVLKEHGEALTRHFYTRMLGGNPELRQLFNQGHQQSGQQQQALAAAVAAYAEHIDDPSVLLPVVERIAHKHVSLGVRAEHYAIVGKHLLASIREVLGEAATDELIDAWAAAYGQLADLLIGRERALYAAAASRDGGWTGWRAFKVVRKTPESAEITSFYLAPADGGATPDYLPGQYVSVRVYVPELGLMQPRQYSLSEAPGMPGQLRISVKREAGSPAGMVSGTLHNRINEGDVLDVSPPQGDFTLDAEDGRPVVLLSGGVGLTPMVSMLNHLTARDDGRQIRFVHACREAGVHAMKEHINALAAKRPNVRKAVFYERVGADDRRGVDYDYEGRVDLHAIRDEVILPDADYYLCGPLPFMQAQRRALADLGVAEHRIHAEVFGTGGVA.

The Globin domain maps to 1 to 138 (MLSPEVRALV…LADLLIGRER (138 aa)). Residue H85 participates in heme b binding. Active-site charge relay system residues include Y95 and E137. The reductase stretch occupies residues 149 to 402 (GGWTGWRAFK…AEVFGTGGVA (254 aa)). In terms of domain architecture, FAD-binding FR-type spans 152–261 (TGWRAFKVVR…SPPQGDFTLD (110 aa)). FAD-binding positions include Y190 and 206 to 209 (RQYS). 274–279 (GVGLTP) is an NADP(+) binding site. An FAD-binding site is contributed by 395–398 (VFGT).

This sequence belongs to the globin family. Two-domain flavohemoproteins subfamily. It in the C-terminal section; belongs to the flavoprotein pyridine nucleotide cytochrome reductase family. Requires heme b as cofactor. The cofactor is FAD.

It catalyses the reaction 2 nitric oxide + NADPH + 2 O2 = 2 nitrate + NADP(+) + H(+). The enzyme catalyses 2 nitric oxide + NADH + 2 O2 = 2 nitrate + NAD(+) + H(+). In terms of biological role, is involved in NO detoxification in an aerobic process, termed nitric oxide dioxygenase (NOD) reaction that utilizes O(2) and NAD(P)H to convert NO to nitrate, which protects the bacterium from various noxious nitrogen compounds. Therefore, plays a central role in the inducible response to nitrosative stress. In Bordetella bronchiseptica (strain ATCC BAA-588 / NCTC 13252 / RB50) (Alcaligenes bronchisepticus), this protein is Flavohemoprotein.